We begin with the raw amino-acid sequence, 156 residues long: Small ribosomal subunit protein uS7 (156 aa).

This sequence belongs to the universal ribosomal protein uS7 family. As to quaternary structure, part of the 30S ribosomal subunit. Contacts proteins S9 and S11.

Functionally, one of the primary rRNA binding proteins, it binds directly to 16S rRNA where it nucleates assembly of the head domain of the 30S subunit. Is located at the subunit interface close to the decoding center, probably blocks exit of the E-site tRNA. This chain is Small ribosomal subunit protein uS7, found in Lactobacillus helveticus (strain DPC 4571).